Here is a 1623-residue protein sequence, read N- to C-terminus: ATP-binding cassette sub-family A member 9 (1623 aa).

The helical transmembrane segment at 31-51 (LLEWLFSLLLILFVYQLSSNL) threads the bilayer. The N-linked (GlcNAc...) asparagine glycan is linked to Asn-120. The next 6 helical transmembrane spans lie at 225–245 (FFIFFCVISFSSLIYYLSVNI), 265–285 (AFWLSWSLMYAGFILVVAVLM), 295–315 (VVLTGFMVVFLLFLFYGLSLI), 329–349 (FLTGLAIFILTVFWGSLGFTA), 354–374 (LPAFVEWTLCFLSPFAFTTGM), and 398–418 (LIMATLFMLVLDALLYLVLAL). The region spanning 481–716 (IRIKNLKKEY…WGIGYHLSLH (236 aa)) is the ABC transporter 1 domain. Position 517-524 (517-524 (GHSGAGKT)) interacts with ATP. The next 7 helical transmembrane spans lie at 863 to 883 (LMTVLLLFGISFVPQLLEHLV), 1025 to 1045 (AFFWIPVAASLTPYIAMGSIS), 1071 to 1091 (LVDIPIYFLILFLMQIMDSVF), 1107 to 1127 (IPCSIGYASSLIFMTYVISFI), 1135 to 1155 (SGIWSFFFLIVTIFFIIATDI), 1163 to 1183 (LLICTFLVPPFTLIGSLLIFS), and 1199 to 1219 (QLVFLALLIPYLHFLLFFFIL). Residues 1287–1520 (LRKEYIGRTK…FGKDYLLEMK (234 aa)) form the ABC transporter 2 domain. Residue 1325–1332 (GHNGAGKS) participates in ATP binding.

The protein belongs to the ABC transporter superfamily. ABCA family. In terms of tissue distribution, highly expressed in heart and to lower extent in kidney, brain and spleen. Weakly expressed in developing and adult brains. Weakly expressed in the cerebellar granular layer at P14 and P21.

It localises to the membrane. Its function is as follows. Transporter that may play a role in monocyte differentiation and lipid transport and homeostasis. This chain is ATP-binding cassette sub-family A member 9 (Abca9), found in Mus musculus (Mouse).